The chain runs to 424 residues: Phosphoribosylamine--glycine ligase (424 aa).

In terms of domain architecture, ATP-grasp spans 111–312; that stretch reads KAFVKECGIK…LLDLCLATAK (202 aa). 137–189 contributes to the ATP binding site; the sequence is IQNASFPLVIKALNKNTSIVYQEEEAIKILEDAFKQSNEPVIIEPFLEGFELS.

This sequence belongs to the GARS family.

It catalyses the reaction 5-phospho-beta-D-ribosylamine + glycine + ATP = N(1)-(5-phospho-beta-D-ribosyl)glycinamide + ADP + phosphate + H(+). It functions in the pathway purine metabolism; IMP biosynthesis via de novo pathway; N(1)-(5-phospho-D-ribosyl)glycinamide from 5-phospho-alpha-D-ribose 1-diphosphate: step 2/2. This Helicobacter pylori (strain ATCC 700392 / 26695) (Campylobacter pylori) protein is Phosphoribosylamine--glycine ligase (purD).